The sequence spans 585 residues: Serine/threonine-protein kinase PknI (585 aa).

At 1 to 349 (MALASGVTFA…ASPTRRRPRR (349 aa)) the chain is on the cytoplasmic side. Residues 12-252 (YTVVRMLGCS…SCREFADAMN (241 aa)) form the Protein kinase domain. ATP is bound by residues 18 to 26 (LGCSAMGEV) and K41. K41, D90, and V92 together coordinate ADP. D137 functions as the Proton acceptor in the catalytic mechanism. Residues 350-370 (ILVGAVAVLLLAGLFAVGIVI) form a helical membrane-spanning segment. The Extracellular portion of the chain corresponds to 371–585 (GRKTNTTATE…PTTTAPGPGR (215 aa)). A disordered region spans residues 546–585 (SGDLPPAVTVPDPATIPDTPDTTSTATLTPPTTTAPGPGR). A compositionally biased stretch (low complexity) spans 554–585 (TVPDPATIPDTPDTTSTATLTPPTTTAPGPGR).

Belongs to the protein kinase superfamily. Ser/Thr protein kinase family. It depends on Mn(2+) as a cofactor. Post-translationally, autophosphorylated at serine and threonine residues.

Its subcellular location is the cytoplasm. It localises to the cell membrane. It carries out the reaction L-seryl-[protein] + ATP = O-phospho-L-seryl-[protein] + ADP + H(+). The catalysed reaction is L-threonyl-[protein] + ATP = O-phospho-L-threonyl-[protein] + ADP + H(+). Functionally, plays an important role in slowing down the growth of mycobacteria within the infected host. The sequence is that of Serine/threonine-protein kinase PknI (pknI) from Mycobacterium bovis (strain ATCC BAA-935 / AF2122/97).